We begin with the raw amino-acid sequence, 211 residues long: Large ribosomal subunit protein bL9 (211 aa).

The tract at residues 180-211 (DDIGAAGMDDDDDDAPAPAQADPSSEESSEED) is disordered.

The protein belongs to the bacterial ribosomal protein bL9 family.

Functionally, binds to the 23S rRNA. The sequence is that of Large ribosomal subunit protein bL9 from Jannaschia sp. (strain CCS1).